Reading from the N-terminus, the 305-residue chain is Serine/threonine-protein phosphatase 6 catalytic subunit (305 aa).

Methionine 1 carries the N-acetylmethionine modification. Mn(2+) is bound by residues aspartate 53, histidine 55, aspartate 81, and asparagine 113. Residue histidine 114 is the Proton donor of the active site. Mn(2+) is bound by residues histidine 163 and histidine 237.

The protein belongs to the PPP phosphatase family. PP-6 (PP-V) subfamily. Protein phosphatase 6 (PP6) holoenzyme is proposed to be a heterotrimeric complex formed by the catalytic subunit, a SAPS domain-containing subunit (PP6R) and an ankyrin repeat-domain containing regulatory subunit (ARS). Interacts with subunits PPP6R1, PPP6R2 and PPP6R3. Interacts with subunit ANKRD28. Interacts with IGBP1. Interacts with MAP3K7. Interacts with NFKBIE. Interacts with TRIM14 and WRNIP1; these interactions positively regulate the RIG-I signaling pathway. It depends on Mn(2+) as a cofactor. Ubiquitously expressed in all tissues tested with strongest expression in lung, spleen, liver, kidney and brain. Weaker expression observed in bladder, pancreas, heart and skeletal muscle.

The protein localises to the mitochondrion. The protein resides in the cytoplasm. The enzyme catalyses O-phospho-L-seryl-[protein] + H2O = L-seryl-[protein] + phosphate. It catalyses the reaction O-phospho-L-threonyl-[protein] + H2O = L-threonyl-[protein] + phosphate. Catalytic subunit of protein phosphatase 6 (PP6). PP6 is a component of a signaling pathway regulating cell cycle progression in response to IL2 receptor stimulation. N-terminal domain restricts G1 to S phase progression in cancer cells, in part through control of cyclin D13 During mitosis, regulates spindle positioning. Down-regulates MAP3K7 kinase activation of the IL1 signaling pathway by dephosphorylation of MAP3K7. Acts as a regulator of innate immunity by mediating dephosphorylation CGAS, STING1 and RIGI. Also participates in the innate immune defense against viruses by desphosphorylating RIGI, an essential step that triggers RIGI-mediated signaling activation. Also regulates innate immunity by acting as a negative regulator of the cGAS-STING pathway: mediates dephosphorylation and inactivation of CGAS and STING1. CGAS dephosphorylation at 'Ser-420' impairs its ability to bind GTP, thereby inactivating it. This is Serine/threonine-protein phosphatase 6 catalytic subunit from Mus musculus (Mouse).